Consider the following 887-residue polypeptide: Endoglucanase 1 (887 aa).

Residues 1–55 form the signal peptide; the sequence is MRLVNSLGRRKILLILAVIVAFSTVLLFAKLWGRKTSSTLDEVGSKTHGDLTAEN. The segment at 40–66 is disordered; the sequence is LDEVGSKTHGDLTAENKNGGYLPEEEI. The span at 43-53 shows a compositional bias: basic and acidic residues; sequence VGSKTHGDLTA. The tract at residues 56-518 is catalytic; the sequence is KNGGYLPEEE…AKMYKLYGGS (463 aa). D131 (nucleophile) is an active-site residue. A disordered region spans residues 441–460; it reads ENPPKRPHHRTAHGSWADSQ. Active-site residues include H448, D486, and E495. Positions 529-684 constitute a CBM3 1 domain; the sequence is VPEDEIFVEA…GVLVFGREPG (156 aa). The interval 684–730 is disordered; the sequence is GSASKSTSKDNGLSKATPTVKTESQPTAKHTQNPASDFKTPANQNSV. Residues 686–729 are compositionally biased toward polar residues; it reads ASKSTSKDNGLSKATPTVKTESQPTAKHTQNPASDFKTPANQNS. The CBM3 2 domain maps to 736–887; sequence IKGEVVLQYA…SNKLVYGKEP (152 aa).

This sequence belongs to the glycosyl hydrolase 9 (cellulase E) family.

It catalyses the reaction Endohydrolysis of (1-&gt;4)-beta-D-glucosidic linkages in cellulose, lichenin and cereal beta-D-glucans.. The protein operates within glycan metabolism; cellulose degradation. Its function is as follows. This enzyme catalyzes the endohydrolysis of 1,4-beta-glucosidic linkages in cellulose, lichenin and cereal beta-D-glucans. Principally active against barley beta-glucan. In Acetivibrio thermocellus (strain ATCC 27405 / DSM 1237 / JCM 9322 / NBRC 103400 / NCIMB 10682 / NRRL B-4536 / VPI 7372) (Clostridium thermocellum), this protein is Endoglucanase 1 (celI).